Consider the following 249-residue polypeptide: Phosphoserine phosphatase (249 aa).

The protein belongs to the HAD-like hydrolase superfamily. Homodimer. The cofactor is Mg(2+). It depends on Co(2+) as a cofactor.

The enzyme catalyses O-phospho-L-serine + H2O = L-serine + phosphate. It carries out the reaction O-phospho-D-serine + H2O = D-serine + phosphate. The protein operates within amino-acid biosynthesis; L-serine biosynthesis; L-serine from 3-phospho-D-glycerate: step 3/3. Functionally, catalyzes the last step of the phosphorylated serine biosynthetic pathway, i.e. dephosphorylation of O-phospho-L-serine to form L-serine. Is also able to dephosphorylate O-phospho-D-serine with similar efficiency. Displays a poor activity on L-phosphothreonine, and cannot use L-phosphotyrosine, pyridoxal phosphate, glucose 6-phosphate, or fructose 6-phosphate as substrates. This chain is Phosphoserine phosphatase, found in Thermus thermophilus (strain ATCC BAA-163 / DSM 7039 / HB27).